We begin with the raw amino-acid sequence, 294 residues long: RAB7A-interacting MON1-CCZ1 complex subunit 1 (294 aa).

A2 is modified (N-acetylalanine).

It belongs to the RIMOC1 family. In terms of assembly, interacts with the MON1A-CCZ1B complex. Interacts with GDP-bound RAB7A and promotes its interaction with the MON1A-CCZ1B complex.

The protein localises to the cytoplasm. It localises to the cytosol. Its function is as follows. Plays an important role in the removal of damaged mitochondria via mitophagy by controlling the stability and localization of RAB7A. Required for the recruitment of RAB7A and ATG9A vesicles to damaged mitochondria and promotes the stability of RAB7A by inhibiting its proteasomal degradation during mitophagy. The sequence is that of RAB7A-interacting MON1-CCZ1 complex subunit 1 from Homo sapiens (Human).